Reading from the N-terminus, the 683-residue chain is MDVCARLALWLLWGLLLHHGQSLSQSHSEKATGSGANSEESTAAEFCRIDKPLCHSEDEKLSFDAVRSIHKLMDDDANGDVDVEESDEFLREDLNYHDPTVKHSTFHGEDKLISVEDLWKAWKSSEVYNWTVDEVVQWLITYVELPQYEETFRKLQLSGHAMPRLAVTNTTMTGTVLKMTDRSHRQKLQLKALDTVLFGPPLLTRHNHLKDFMLVVSIVIGVGGCWFAYIQNRYSKEHMKKMMKDLEGLHRAEQSLHDLQERLHKAQEEHRTVEVEKVHLEKKLRDEINLAKQEAQRLKELREGTENERSRQKYAEEELEQVREALRKAEKELESHSSWYAPEALQKWLQLTHEVEVQYYNIKKQNAEKQLLVAKEGAEKIKKKRNTLFGTFHVAHSSSLDDVDHKILTAKQALSEVTAALRERLHRWQQIEILCGFQIVNNPGIHSLVAALNIDPSWMGSTRPNPAHFIMTDDVDDMDEEIVSPLSMQSPSLQSSVRQRLTEPQHGLGSQRDLTHSDSESSLHMSDRQRLAPKPPQMIRAADEALSAMTSNGSHRLIEGAHPGSLVEKLPDSPALAKKALLALNHGLDKAHSLMELSSPALPSGSPHLDSSRSHSPSPPDPDTPSPAGDSRALQASRNTRIPHLAGKKAAAEEDNGSIGEETDSSPGRKKFPLKIFKKPLKK.

An N-terminal signal peptide occupies residues 1–22 (MDVCARLALWLLWGLLLHHGQS). Topologically, residues 23–211 (LSQSHSEKAT…LLTRHNHLKD (189 aa)) are extracellular. EF-hand domains follow at residues 62–95 (SFDAVRSIHKLMDDDANGDVDVEESDEFLREDLN) and 100–124 (TVKHSTFHGEDKLISVEDLWKAWKS). 5 residues coordinate Ca(2+): Asp-74, Asp-76, Asn-78, Asp-80, and Glu-85. Asn-129 and Asn-169 each carry an N-linked (GlcNAc...) asparagine glycan. Residues 130-198 (WTVDEVVQWL…QLKALDTVLF (69 aa)) enclose the SAM domain. Residues 212 to 232 (FMLVVSIVIGVGGCWFAYIQN) traverse the membrane as a helical segment. The Cytoplasmic portion of the chain corresponds to 233–683 (RYSKEHMKKM…LKIFKKPLKK (451 aa)). Residues 246–440 (LEGLHRAEQS…IEILCGFQIV (195 aa)) are a coiled coil. Ser-255 is subject to Phosphoserine. The tract at residues 342–440 (PEALQKWLQL…IEILCGFQIV (99 aa)) is SOAR/CAD. A contributes to fast Ca(2+)-dependent inactivation of CRAC channels region spans residues 473-481 (DDVDDMDEE). A compositionally biased stretch (low complexity) spans 488–497 (MQSPSLQSSV). Residues 488 to 535 (MQSPSLQSSVRQRLTEPQHGLGSQRDLTHSDSESSLHMSDRQRLAPKP) are disordered. A Phosphothreonine modification is found at Thr-502. Ser-510 carries the phosphoserine modification. Over residues 513–530 (DLTHSDSESSLHMSDRQR) the composition is skewed to basic and acidic residues. Thr-515 bears the Phosphothreonine mark. Residues Ser-517, Ser-519, Ser-521, Ser-522, Ser-565, Ser-573, Ser-606, Ser-616, and Ser-626 each carry the phosphoserine modification. A disordered region spans residues 597 to 683 (LSSPALPSGS…LKIFKKPLKK (87 aa)). The short motif at 640-643 (TRIP) is the Microtubule tip localization signal element. The span at 653–664 (EEDNGSIGEETD) shows a compositional bias: acidic residues. Residue Ser-658 is modified to Phosphoserine. A Phosphothreonine modification is found at Thr-663. Ser-666 carries the post-translational modification Phosphoserine. Residues 668–683 (GRKKFPLKIFKKPLKK) show a composition bias toward basic residues. Residues 670-683 (KKFPLKIFKKPLKK) are required for generation of inwardly rectifying CRAC currents.

As to quaternary structure, monomer in the presence of Ca(2+). It oligomerizes in absence of Ca(2+). Forms homooligomers and heterooligomers with STIM2. Interacts with pore-forming subunits of CRAC channels, ORAI1, ORAI2 and ORAI3; this interaction is potentiated upon Ca(2+) store depletion. Interacts (via the transmembrane region and the SOAR/CAD domain) with SPPL3; the interaction promotes the binding of STIM1 to ORAI1. Interacts with ORAI1. Interacts with MAPRE1; probably required for targeting to the growing microtubule plus ends. Interacts with CRACR2A/EFCAB4B; the interaction is direct and takes place in absence of Ca(2+). Forms a complex with CRACR2A/EFCAB4B and ORAI1 at low concentration of Ca(2+), the complex dissociates at elevated Ca(2+) concentrations. Interacts with SARAF, promoting a slow inactivation of STIM1-dependent SOCE activity, possibly by facilitating the deoligomerization of STIM1. Interacts with EFHB; the interaction takes place upon Ca(2+)-store depletion and inhibits the association with SARAF. Interacts with ASPH. Interacts with SLC35G1; intracellular Ca(2+)-dependent. May interact with ATP1A1, ATP2A2, ATP2B1, ATP2B4, KPNB1 and XPO1; through SLC35G1. Interacts with TMEM203. Interacts with STIMATE, promoting STIM1 conformational switch. Interacts with TMEM178A. Interacts with CASQ1 (via C-terminal end and preferentially with the monomeric form); this interaction increases in response to a depletion of intracellular calcium, decreases both STIM1 aggregation and clustering, interaction of STIM1 with ORAI1 and store-operated Ca(2+) entry (SOCE) activity. Glycosylation is required for cell surface expression. In terms of processing, phosphorylated predominantly on Ser residues.

Its subcellular location is the cell membrane. It is found in the endoplasmic reticulum membrane. The protein resides in the sarcoplasmic reticulum. The protein localises to the cytoplasm. It localises to the cytoskeleton. In terms of biological role, acts as a Ca(2+) sensor that gates two major inward rectifying Ca(2+) channels at the plasma membrane: Ca(2+) release-activated Ca(2+) (CRAC) channels and arachidonate-regulated Ca(2+)-selective (ARC) channels. Plays a role in mediating store-operated Ca(2+) entry (SOCE), a Ca(2+) influx following depletion of intracellular Ca(2+) stores. Upon Ca(2+) depletion, translocates from the endoplasmic reticulum to the plasma membrane where it activates CRAC channel pore-forming subunits ORA1, ORA2 and ORAI3 to generate sustained and oscillatory Ca(2+) entry. Involved in enamel formation. The chain is Stromal interaction molecule 1 (STIM1) from Bos taurus (Bovine).